The sequence spans 209 residues: Uracil phosphoribosyltransferase (209 aa).

Residues arginine 79, arginine 104, and 131–139 (DPMLATGGS) each bind 5-phospho-alpha-D-ribose 1-diphosphate. Uracil-binding positions include isoleucine 194 and 199-201 (GDA). 5-phospho-alpha-D-ribose 1-diphosphate is bound at residue aspartate 200.

Belongs to the UPRTase family. It depends on Mg(2+) as a cofactor.

It catalyses the reaction UMP + diphosphate = 5-phospho-alpha-D-ribose 1-diphosphate + uracil. Its pathway is pyrimidine metabolism; UMP biosynthesis via salvage pathway; UMP from uracil: step 1/1. Its activity is regulated as follows. Allosterically activated by GTP. Functionally, catalyzes the conversion of uracil and 5-phospho-alpha-D-ribose 1-diphosphate (PRPP) to UMP and diphosphate. This is Uracil phosphoribosyltransferase from Streptococcus sanguinis (strain SK36).